The following is a 374-amino-acid chain: uncharacterized protein (374 aa).

The stretch at 298-332 (TKEKLLKLHSEQKSLSEKINKLSGEKDIEQSMINN) forms a coiled coil.

This is an uncharacterized protein from Acanthamoeba polyphaga (Amoeba).